Consider the following 499-residue polypeptide: MMMKYEAVIIGGGPVGFMLASELAIAGVGTCVIERLEKPVPHSKALTLHPRTLELLEMRGILERFVSKGSKIPTGHFSMLDTRLDFSGLDTSCPYTLLLPQSKTEKLLEDHARSLGTEVFRGAEALAVTQNGEAVQTIFKDRDGSVRTITSKFAVGADGAGSTVRKQAKIEFPGTDSTVTAALGDVVLLSPPPSGVLSLCTKEGGVMIVPLSPDRYRVVVISPYRTQTPKDVPVTEEELKADLLRICGTDFGLTDPSWMSRFGNAARQAKRYRDGRIFLAGDAAHIHFPAGGQGLNVGLQDAMNLGWKLAAAIKGSAPSWLLDSYHDERHPAAEGLLRNTEAQTKLIDFTQAGLHLRSMMSELLAFPDVNRYVAGQISALDVRYEADRTMPPNRLNGARLPDMKLILSDGNSERLYSFLQNGTFVLLSLRQEADDHIEVKGLRTVTASLAEPNEKLRNVHTILIRPDGHVAWAVDASAPDCSEVIQKGISRWFSVTSRV.

Residues 6–35 and 272–282 each bind FAD; these read EAVI…VIER and YRDGRIFLAGD.

This sequence belongs to the PheA/TfdB FAD monooxygenase family. The cofactor is FAD.

This is an uncharacterized protein from Bacillus subtilis (strain 168).